A 602-amino-acid polypeptide reads, in one-letter code: MTDVPVSRIRNFSIIAHIDHGKSTLADRMLQDTQTVAQRDMKEQFLDNMELERERGITIKLQAARMRYVAKDGEEYILNLIDTPGHVDFSYEVSRSLAACEGALLVVDASQGVEAQTLANVYLALDNNLEIIPVLNKIDLPGAEPDRVTEEIEEVVGLDCTDIIRASAKQGLGINDILESIVQQVPPPADTIDQPLRALIFDSYYDPYRGVIVYFRVMDGEVKKGDKVRLMASKKEYEIDELGVLAPNQVQVDALHAGEVGYFAAAIKSVEDARVGDTITSAVHPAPAPLPGYTEAKPMVFCGLFPTDADQYSDLRDALDKLKLNDAALSFEPETSSAMGFGFRCGFLGLLHLEIVQERLEREYNLDLITTAPSVVYRVTTTDGEVMEIDNPSQLPDPQKREKIEEPYIQVDVITPEEFVGTIMDLCQTRRGIFKDMKYFTESRTNIIYELPLAEVVTDFFDQLKSRTRGYASMEYQLIGYRVGQLVRLDILVNKDSVDSLAMIVHRDKAYNVGRAMAEKLKELIPRHQFKIPIQAAIGSKIIASEHIPALRKDVLAKCYGGDISRKKKLLQKQAKGKKRMKSIGTVDVPQEAFMAVLKLDQ.

Positions 7–189 (SRIRNFSIIA…SIVQQVPPPA (183 aa)) constitute a tr-type G domain. GTP contacts are provided by residues 19-24 (DHGKST) and 136-139 (NKID).

It belongs to the TRAFAC class translation factor GTPase superfamily. Classic translation factor GTPase family. LepA subfamily.

It localises to the cell inner membrane. It catalyses the reaction GTP + H2O = GDP + phosphate + H(+). Its function is as follows. Required for accurate and efficient protein synthesis under certain stress conditions. May act as a fidelity factor of the translation reaction, by catalyzing a one-codon backward translocation of tRNAs on improperly translocated ribosomes. Back-translocation proceeds from a post-translocation (POST) complex to a pre-translocation (PRE) complex, thus giving elongation factor G a second chance to translocate the tRNAs correctly. Binds to ribosomes in a GTP-dependent manner. The polypeptide is Elongation factor 4 (Picosynechococcus sp. (strain ATCC 27264 / PCC 7002 / PR-6) (Agmenellum quadruplicatum)).